The chain runs to 119 residues: Holo-[acyl-carrier-protein] synthase (119 aa).

The Mg(2+) site is built by aspartate 8 and glutamate 58.

It belongs to the P-Pant transferase superfamily. AcpS family. Requires Mg(2+) as cofactor.

Its subcellular location is the cytoplasm. The catalysed reaction is apo-[ACP] + CoA = holo-[ACP] + adenosine 3',5'-bisphosphate + H(+). Its function is as follows. Transfers the 4'-phosphopantetheine moiety from coenzyme A to a Ser of acyl-carrier-protein. This Bacillus cytotoxicus (strain DSM 22905 / CIP 110041 / 391-98 / NVH 391-98) protein is Holo-[acyl-carrier-protein] synthase.